Here is a 300-residue protein sequence, read N- to C-terminus: N-acetylmannosamine kinase (300 aa).

ATP contacts are provided by residues 5 to 12 (ALDIGGTK) and 132 to 139 (GVGGGIVL). Zn(2+) is bound by residues His156, Cys166, Cys168, and Cys173.

The protein belongs to the ROK (NagC/XylR) family. NanK subfamily. In terms of assembly, homodimer.

It carries out the reaction an N-acyl-D-mannosamine + ATP = an N-acyl-D-mannosamine 6-phosphate + ADP + H(+). It participates in amino-sugar metabolism; N-acetylneuraminate degradation; D-fructose 6-phosphate from N-acetylneuraminate: step 2/5. In terms of biological role, catalyzes the phosphorylation of N-acetylmannosamine (ManNAc) to ManNAc-6-P. The chain is N-acetylmannosamine kinase from Haemophilus influenzae (strain PittEE).